A 3374-amino-acid chain; its full sequence is PNEEAAAVRLSRGPAAERGFTIWPXAFVLQPKEKIVVSITWTPLKGGRVRETVTFLVNDILKHQAILLGNAEEPKKKKRTLWDTINKKKVSASSRHNKKVSNIQNVNKTFNVSPKADKVRSPLQACENLATNGNCSPPESNPLILEENKLPISPISPAFQECHRETCLPLHVRRSTTYTSLPASENGELEKADGANTAKDFHFNEKGITETSFDSIDNVNSQTEENGKLTLTPNYSSSLNITQSQGHFLSPDSFVNNSHASNNEPEFVKCLSPDMFVKGNTRPVLLESKRVHEICRKILSPDSFINDNYGLNEDLETESVNPILSPNQFLKDNIAYICISQQTCQLPLSTRRFQDSQPPQDERKNAAVPCISECQQLESPKATFEASKALEVMSNSYTFKKQNQPKFSAVQDISSHSREKPIKRRPILSATVTKRKPTCAVXNQMETVKPKAKRCLNVVVGDCEKETDDQKEKDDFHPLLPTRDLILSRPKSSKNIVTPPCKAASVARKRKSKGHTGDENVRVRVTECSEVQEVKRTHFSPLASKTSTVKHTHKVLTSSLKRVSHREKVNLKRKTDSLGYRTPTSKTNKRTRPFVPVAQSNLTFIKALKAGIPRHPMPFAAKNIFYDERWKEKQEQGFTWWLNFILTPDDFTVKTNISEVNASTLLLGVESQHKISVPKAPTKDEVSLRAYTARCRLNRLRRAACRLFTSEKMVKAMKKLEIEIEARRLIVRKDRHLWKDVGERQKVLNWLLSYNPLWLRIGLETIYGELVPLEDNSDVTGLAMFILNRLLWNPDIAAEYRHPSVPHLYRDGHEEALSKFTLKKLLLLVCFLDYAKISRLIDHDPCLFCKDAEFKASXDILLAFSRDFLGGEGDLSRHLSLLGFPVTHVQMPFDEFDFAVKNLAVDLQCGVRLVRTMELLTQNWNLSKKLRIPAISRLQKMHNVDIVLEILKSRGIQLNDEHGNAILSKDIVDRHREKTLALLWKIALAFQVDISLNLDQLKEEIDFLKKTQSMKKTMSALLCRPDAVISKKRDERHSGPFEQYSESVKLLMDWVNAVCGFYNKKVENFTVSFSDGRVLCYLIHHYHPCYVPFDAICQRTTQTVECTHTGSVVLNSSSESDGSFLDLSXKSPDQENTSELYKELLENEKKNFQLVRSAARDLGGIPAMIHHSDMSNTIPDEKVVITYLSFLCARLLDLRKETRAARLIQTTWRQYKLKKDLKHHQERDKAARIIQSAIINFLTKQRFKKKVSAALVIQKYWRRALAKRKLLMLKKEKLERVHSKSASIIQRYWRRYSTRKQFLKLKYYSIILQSKIRMIIAVASYKRYHWATVTIQXHWRAHVRSKQDRQRYELLRSSTLVIQSAFRRWRRHKRQSQINAAITLQRAFREWRVQKRAQEERAAVVIQSWYRMHRESQKYIHLRSCVIIIQARFRCFQAQKLYTRTRESILTLQKHYRAYVKGKVERTGYLQKRAAAIRLQAAFRGRRARNLCKQIRAACVLQSCWRMRQDRLRFLNLKKNIIRLQAHIRRRQQLQTYQKMKKAALVIQIHFRAYISAKEVLASYQKTRSAVIVLQSACRRMQARKKFLHILTAVVKIQSYYRAYASRRKFLRLKKATVKLQSIVRMKQARKQYLHLRAIAQQREEHLRASCIKLQAFLRGYLVRKQVRLQRKAAVLLQSYFRMRKMRLEYLKVCQAAVVIQRYYRAHRAGAQQRKHFLQVRRAVTCLQAAYRGYKVRRQLQQQSAAALKIQAAFRGYRQRTKYQSMLQSALKIQRWYRTRKMVSALRSHFFKTRTAAISLQSAYRGWKVRKQMRKEHEAAVKIQSAFRTARAQKEFRLLKTAASVIQQHLRARATGLRQRTEYMALRRAAVTLQSAWRGRAARRRIQKQQRCAIIIQACYRRHVQWKRWEIMKKAARLIQMHYRAYRTGRKQHHLFLKTKGAAIILQSAFRGVRARKKVKEMHQAATTIQSRYRAYQARKKYASYRAAAVIIQRWYRAAKLAGCQREEYLAVKKAALKIQAVYRGVRERRQTRRMHMAATLIKAAFKMQQSRRRYQQMRTAAIVIQVRYRAYRQGRAQRAKYLTTLKAVALLQAALRGARVRQNLRRMRTAATLIQAHYRGRRQQAYFNKLKKVTKTVQQKYRAGRERHAQLRRYNQLRRSAICIQAAFRGMRARKRLKAMHSAAAVIQRRFRTLVMRRRFLSLRKTAVWVQRKYRAKVCARHHLQQLQLQKAAIKIQSWYRGWMVRKKTQEMRRAATVLQAAFRRHRARARYQAWRRASQVIQQRFRAGQAARLQRRQYLQQXRSALVLQAAFRGMRIRRRLKRMHASATLIQSRFRSVRVRKRFLSLKKAAVFVQRKYRATICAKHHLQRFLELKKAIIIIQAFYRRRMVKKQLQEMHRAAALIQASFRMHRARLAFQTWKLAXVLIQQHYRAYRAAKLQRALYIRWRHSAVVIQAAYKGLKARQLLREKHRAAVIIQSTYRMYRQHFSYQKLQWATKVIQERYRVSKRKALQHDALKAAACARADFQDMVIRGLIQERQHQAAITVQKHFRAFKTRKRYLHFRAKVVFVQRRYRVLMAVRTQAAICIQSCFRGFKARRGIQGMHLAATRIQSCYRRHRARADYQAKKRAVVVIQNHYRSYVRVKMERKEFLAIQKSARTIQAAFRGMKVRQKLKTMPDEKMAAPATRPAFYCHRTESQHEAGQSPALVAQGLYKTSLVGPSQETEHHSQRKAAVTIQKAFRKMVTRRLEKQRSAAVQIQSFLQMAVYRRRFLQQKRAALTLQRYFRTQQSRKRFLLYREAAVGLQNPHRAFLPAKHQRELYSQIRSSVIIIQARVKGFIQKRKFRKLKDSTIKIQAVWRRHKARKYLREVKAACRIQAWYRCRKARKEYLAVLRAVRIIQRCFCTQQQRRRFLNVRASAVIIQRRWRAVLSGRTTHEQSLMTKRHQAACLIQANFRGYKARQVFLQQKSAALTIQRFIRARKAGKHQRMKYVELKKSTVVLQALVRGWLVRKRISEQRAKIRLLHFAAAAFYHLSALRIQRAYRRHMALKNANNKQLNSAICIQRWFRARSQRKRFLQKYSIVNIQREAREQASQHSRAASVIQRAVRHFLLRKKQENLNKRIAKIQALWRGYSWRKKNDTSKTKAIRQRLQCVNREIREENKLYHRTVFALHHLLTYKYLSTVLEALKHLEAVTRLSSVCCEKMAQSGAISKVFVLIRSCNRSVPCMEVIRYAVQVLLNVAKYEKTTSAIYBVENCVDTLLELLQMYQEKSGDKVADKSRSIFTKTCCLLAVLLKTTTRASDVQSRSKVVDRIYSLYKLTAHKHKVNTERILCKQKKNSSVSLSFFPETPVRTRMVSRLKPDWVLRRDNV.

Residues Ser-212, Ser-215, Ser-300, and Ser-325 each carry the phosphoserine modification. Residues 492–518 (SSKNIVTPPCKAASVARKRKSKGHTGD) form a disordered region. A Phosphoserine modification is found at Ser-540. The 137-residue stretch at 855–991 (KASXDILLAF…LLWKIALAFQ (137 aa)) folds into the Calponin-homology (CH) 1 domain. Residues 992-1013 (VDISLNLDQLKEEIDFLKKTQS) adopt a coiled-coil conformation. Ser-1038 carries the post-translational modification Phosphoserine. The region spanning 1045 to 1196 (SESVKLLMDW…YLSFLCARLL (152 aa)) is the Calponin-homology (CH) 2 domain. IQ domains follow at residues 1201–1230 (ETRA…RDKA), 1282–1313 (HSKS…IILQ), 1472–1503 (KRAA…VLQS), 1567–1596 (TRSA…AVVK), 1590–1619 (ILTA…ATVK), 1613–1642 (LKKA…IAQQ), 1647–1678 (LRAS…VLLQ), 1720–1749 (VRRA…AALK), 1743–1772 (QSAA…SALK), 1793–1822 (TRTA…AAVK), 1816–1847 (EHEA…SVIQ), 1866–1897 (LRRA…IIIQ), 1939–1968 (TKGA…AATT), 1962–1993 (MHQA…VIIQ), 2012–2043 (VKKA…TLIK), 2035–2066 (MHMA…IVIQ), 2085–2116 (TLKA…TLIQ), 2108–2137 (MRTA…VTKT), 2158–2189 (LRRS…AVIQ), 2181–2212 (MHSA…VWVQ), 2230–2261 (LQKA…TVLQ), 2253–2284 (MRRA…QVIQ), 2303–2334 (QXRS…TLIQ), 2326–2357 (MHAS…VFVQ), 2376–2407 (LKKA…ALIQ), 2399–2430 (MHRA…VLIQ), 2449–2480 (WRHS…VIIQ), 2472–2503 (KHRA…KVIQ), 2542–2573 (QHQA…VFVQ), 2583–2612 (RTQA…AATR), 2606–2637 (MHLA…VVIQ), 2656–2685 (IQKS…EKMA), 2732–2763 (QRKA…QIQS), 2777–2806 (QKRA…AAVG), 2827–2856 (IRSS…STIK), 2850–2881 (LKDS…RIQA), 2872–2903 (EVKA…RIIQ), 2947–2976 (RHQA…AALT), 2997–3028 (LKKS…RLLH), 3099–3128 (HSRA…RIAK), and 3122–3153 (LNKR…IRQR).

The protein resides in the cytoplasm. It localises to the cytoskeleton. Its subcellular location is the spindle. The protein localises to the nucleus. Probable role in mitotic spindle regulation and coordination of mitotic processes. May have a preferential role in regulating neurogenesis. The chain is Abnormal spindle-like microcephaly-associated protein homolog (ASPM) from Ovis aries (Sheep).